We begin with the raw amino-acid sequence, 141 residues long: Hemoglobin subunit alpha (141 aa).

Residues 1–141 (VLSPADKSNV…VSTVLTSKYR (141 aa)) form the Globin domain. Position 3 is a phosphoserine (Ser-3). 2 positions are modified to N6-succinyllysine: Lys-7 and Lys-11. An N6-acetyllysine; alternate modification is found at Lys-16. At Lys-16 the chain carries N6-succinyllysine; alternate. Tyr-24 carries the phosphotyrosine modification. A Phosphoserine modification is found at Ser-35. At Lys-40 the chain carries N6-succinyllysine. Residue Ser-49 is modified to Phosphoserine. His-58 lines the O2 pocket. His-87 contacts heme b. Ser-102 is subject to Phosphoserine. Thr-108 carries the post-translational modification Phosphothreonine. Phosphoserine is present on residues Ser-124 and Ser-131. A phosphothreonine mark is found at Thr-134 and Thr-137. The residue at position 138 (Ser-138) is a Phosphoserine.

This sequence belongs to the globin family. In terms of assembly, heterotetramer of two alpha chains and two beta chains. Red blood cells.

Functionally, involved in oxygen transport from the lung to the various peripheral tissues. Hemopressin acts as an antagonist peptide of the cannabinoid receptor CNR1. Hemopressin-binding efficiently blocks cannabinoid receptor CNR1 and subsequent signaling. The sequence is that of Hemoglobin subunit alpha (HBA) from Saguinus oedipus (Cotton-top tamarin).